The sequence spans 185 residues: Ribosome-recycling factor (185 aa).

Belongs to the RRF family.

The protein localises to the cytoplasm. In terms of biological role, responsible for the release of ribosomes from messenger RNA at the termination of protein biosynthesis. May increase the efficiency of translation by recycling ribosomes from one round of translation to another. In Neisseria gonorrhoeae (strain ATCC 700825 / FA 1090), this protein is Ribosome-recycling factor.